The following is a 453-amino-acid chain: Ribosomal protein uS12 methylthiotransferase RimO (453 aa).

In terms of domain architecture, MTTase N-terminal spans 5 to 120; the sequence is PKVGFVSLGC…VMQAVHSHLP (116 aa). Residues C14, C50, C79, C151, C155, and C158 each contribute to the [4Fe-4S] cluster site. The Radical SAM core domain occupies 137–382; it reads LTPRHYAYLK…MEVAEEVSAR (246 aa). The TRAM domain occupies 385 to 453; sequence QRKVGKTLKV…ADGHDLWGEV (69 aa).

It belongs to the methylthiotransferase family. RimO subfamily. It depends on [4Fe-4S] cluster as a cofactor.

The protein localises to the cytoplasm. The enzyme catalyses L-aspartate(89)-[ribosomal protein uS12]-hydrogen + (sulfur carrier)-SH + AH2 + 2 S-adenosyl-L-methionine = 3-methylsulfanyl-L-aspartate(89)-[ribosomal protein uS12]-hydrogen + (sulfur carrier)-H + 5'-deoxyadenosine + L-methionine + A + S-adenosyl-L-homocysteine + 2 H(+). In terms of biological role, catalyzes the methylthiolation of an aspartic acid residue of ribosomal protein uS12. This Burkholderia vietnamiensis (strain G4 / LMG 22486) (Burkholderia cepacia (strain R1808)) protein is Ribosomal protein uS12 methylthiotransferase RimO.